Here is a 405-residue protein sequence, read N- to C-terminus: Arginine biosynthesis bifunctional protein ArgJ (405 aa).

Substrate is bound by residues threonine 167, lysine 190, threonine 201, glutamate 281, asparagine 400, and serine 405. The active-site Nucleophile is threonine 201.

It belongs to the ArgJ family. As to quaternary structure, heterotetramer of two alpha and two beta chains.

The protein resides in the cytoplasm. It catalyses the reaction N(2)-acetyl-L-ornithine + L-glutamate = N-acetyl-L-glutamate + L-ornithine. It carries out the reaction L-glutamate + acetyl-CoA = N-acetyl-L-glutamate + CoA + H(+). It participates in amino-acid biosynthesis; L-arginine biosynthesis; L-ornithine and N-acetyl-L-glutamate from L-glutamate and N(2)-acetyl-L-ornithine (cyclic): step 1/1. The protein operates within amino-acid biosynthesis; L-arginine biosynthesis; N(2)-acetyl-L-ornithine from L-glutamate: step 1/4. In terms of biological role, catalyzes two activities which are involved in the cyclic version of arginine biosynthesis: the synthesis of N-acetylglutamate from glutamate and acetyl-CoA as the acetyl donor, and of ornithine by transacetylation between N(2)-acetylornithine and glutamate. This is Arginine biosynthesis bifunctional protein ArgJ from Nocardia farcinica (strain IFM 10152).